A 796-amino-acid polypeptide reads, in one-letter code: Exocyst complex component 3 (796 aa).

Residues 87 to 174 (PQLKEKLREL…GTNTEKEQML (88 aa)) are a coiled coil.

Belongs to the SEC6 family. In terms of assembly, the exocyst complex is composed of sec-3/exoc1, sec-5/exoc2, sec-6/exoc3, sec-8/exoc4, sec-10/exoc5, sec-15/exoc6, exo-70/exoc7 and exo-84/exoc8.

Functionally, component of the exocyst complex involved in the docking of exocytic vesicles with fusion sites on the plasma membrane. In Caenorhabditis elegans, this protein is Exocyst complex component 3 (sec-6).